A 171-amino-acid chain; its full sequence is Small ribosomal subunit protein uS4 (171 aa).

Positions 103–167 (RRLQTLVHKR…SPMKKQIEAA (65 aa)) constitute an S4 RNA-binding domain.

It belongs to the universal ribosomal protein uS4 family. As to quaternary structure, part of the 30S ribosomal subunit. Contacts protein S5. The interaction surface between S4 and S5 is involved in control of translational fidelity.

Its function is as follows. One of the primary rRNA binding proteins, it binds directly to 16S rRNA where it nucleates assembly of the body of the 30S subunit. Functionally, with S5 and S12 plays an important role in translational accuracy. In Methanothermobacter thermautotrophicus (strain ATCC 29096 / DSM 1053 / JCM 10044 / NBRC 100330 / Delta H) (Methanobacterium thermoautotrophicum), this protein is Small ribosomal subunit protein uS4.